Reading from the N-terminus, the 644-residue chain is L-aspartate oxidase 2-a, chloroplastic (644 aa).

FAD is bound by residues Ser94 to Ala97, Lys116, Asn123 to Gly130, and Asp294. The active-site Proton donor/acceptor is the Arg369. Residues Glu454 and Ser470–Leu471 each bind FAD.

Belongs to the FAD-dependent oxidoreductase 2 family. NadB subfamily. FAD is required as a cofactor.

The protein resides in the plastid. It is found in the chloroplast. The catalysed reaction is L-aspartate + O2 = iminosuccinate + H2O2. The protein operates within alkaloid biosynthesis; nicotine biosynthesis. Its pathway is cofactor biosynthesis; NAD(+) biosynthesis; iminoaspartate from L-aspartate (oxidase route): step 1/1. Functionally, involved in the biosynthesis of pyridine alkaloid natural products, leading mainly to the production of anabasine, anatabine, nicotine and nornicotine, effective deterrents against herbivores with antiparasitic and pesticide properties (neurotoxins); nornicotine serves as the precursor in the synthesis of the carcinogen compound N'-nitrosonornicotine (NNN). Catalyzes the oxidation of L-aspartate to iminoaspartate. This is L-aspartate oxidase 2-a, chloroplastic from Nicotiana tabacum (Common tobacco).